Here is a 595-residue protein sequence, read N- to C-terminus: Aspartate--tRNA(Asp/Asn) ligase (595 aa).

E175 is an L-aspartate binding site. An aspartate region spans residues 199 to 202 (QQYK). The L-aspartate site is built by R221 and H454. Residue 221–223 (RDE) participates in ATP binding. E488 is a binding site for ATP. Residue R495 participates in L-aspartate binding. 540 to 543 (GIDR) contributes to the ATP binding site.

Belongs to the class-II aminoacyl-tRNA synthetase family. Type 1 subfamily. As to quaternary structure, homodimer.

Its subcellular location is the cytoplasm. The catalysed reaction is tRNA(Asx) + L-aspartate + ATP = L-aspartyl-tRNA(Asx) + AMP + diphosphate. Its function is as follows. Aspartyl-tRNA synthetase with relaxed tRNA specificity since it is able to aspartylate not only its cognate tRNA(Asp) but also tRNA(Asn). Reaction proceeds in two steps: L-aspartate is first activated by ATP to form Asp-AMP and then transferred to the acceptor end of tRNA(Asp/Asn). The chain is Aspartate--tRNA(Asp/Asn) ligase from Rhizobium meliloti (strain 1021) (Ensifer meliloti).